The primary structure comprises 309 residues: Ribosomal RNA small subunit methyltransferase H (309 aa).

Residues glycine 44–histidine 46, aspartate 62, phenylalanine 102, aspartate 118, and glutamine 125 contribute to the S-adenosyl-L-methionine site. Positions leucine 289 to serine 309 are disordered.

The protein belongs to the methyltransferase superfamily. RsmH family.

It localises to the cytoplasm. It carries out the reaction cytidine(1402) in 16S rRNA + S-adenosyl-L-methionine = N(4)-methylcytidine(1402) in 16S rRNA + S-adenosyl-L-homocysteine + H(+). Specifically methylates the N4 position of cytidine in position 1402 (C1402) of 16S rRNA. The chain is Ribosomal RNA small subunit methyltransferase H from Synechococcus sp. (strain JA-3-3Ab) (Cyanobacteria bacterium Yellowstone A-Prime).